The primary structure comprises 118 residues: Vitelline membrane protein Vm32E (118 aa).

Positions 1 to 17 are cleaved as a signal peptide; that stretch reads MKIVALTLVAFVALAGA. The VM domain maps to 36–75; it reads GYPAPPCPTNYLFSCQPNLAPAPCAQEAQAPAYGSAGAYT.

It belongs to the vitelline membrane family.

It is found in the secreted. Its function is as follows. Major early eggshell protein. This Drosophila simulans (Fruit fly) protein is Vitelline membrane protein Vm32E.